An 807-amino-acid polypeptide reads, in one-letter code: Ribosome biogenesis protein ERB1 (807 aa).

A disordered region spans residues 1–112 (MMAKNNKTTE…DTTSLTDRLS (112 aa)). 2 stretches are compositionally biased toward acidic residues: residues 21-30 (EESDVEEDED) and 42-56 (EASE…YESA). S23 bears the Phosphoserine mark. Residues 57-69 (VEEKESSSDKEAQ) show a composition bias toward basic and acidic residues. S72 and S76 each carry phosphoserine. The segment covering 86–102 (EEEGDEEEDYDSSEFSD) has biased composition (acidic residues). K127 participates in a covalent cross-link: Glycyl lysine isopeptide (Lys-Gly) (interchain with G-Cter in ubiquitin). Phosphoserine is present on residues S146 and S149. Positions 265–383 (RFVPSKNEAK…LRKVPGYGES (119 aa)) are required for interaction with NOP7. Positions 383-419 (SIRERFERSLDLYLAPRVRKNKLNIDPNSLIPELPSP) are required for interaction with YTM1. The residue at position 418 (S418) is a Phosphoserine. WD repeat units lie at residues 435-474 (GHKG…EVYR), 483-523 (NPDD…YDIE), 592-634 (SCKK…TQSP), 637-675 (KSKG…LVKK), 678-717 (PGAR…TPYK), 721-760 (YHEK…DMMK), and 776-807 (INSL…LWTT).

Belongs to the WD repeat BOP1/ERB1 family. As to quaternary structure, component of the NOP7 complex, composed of ERB1, NOP7 and YTM1. The complex is held together by ERB1, which interacts with NOP7 via its N-terminal domain and with YTM1 via a high-affinity interaction between the seven-bladed beta-propeller domains of the 2 proteins. The NOP7 complex associates with the 66S pre-ribosome.

Its subcellular location is the nucleus. It localises to the nucleolus. It is found in the nucleoplasm. Functionally, component of the NOP7 complex, which is required for maturation of the 25S and 5.8S ribosomal RNAs and formation of the 60S ribosome. The protein is Ribosome biogenesis protein ERB1 of Saccharomyces cerevisiae (strain YJM789) (Baker's yeast).